Consider the following 510-residue polypeptide: MRPGLSFLLALLFFLGQAAGDLGDVGPPIPSPGFSSFPGVDSSSSFSSSSRSGSSSSRSLGSGGSVSQLFSNFTGSVDDRGTCQCSVSLPDTTFPVDRVERLEFTAHVLSQKFEKELSKVREYVQLISVYEKKLLNLTVRIDIMEKDTISYTELDFELIKVEVKEMEKLVIQLKESFGGSSEIVDQLEVEIRNMTLLVEKLETLDKNNVLAIRREIVALKTKLKECEASKDQNTPVVHPPPTPGSCGHGGVVNISKPSVVQLNWRGFSYLYGAWGRDYSPQHPNKGLYWVAPLNTDGRLLEYYRLYNTLDDLLLYINARELRITYGQGSGTAVYNNNMYVNMYNTGNIARVNLTTNTIAVTQTLPNAAYNNRFSYANVAWQDIDFAVDENGLWVIYSTEASTGNMVISKLNDTTLQVLNTWYTKQYKPSASNAFMVCGVLYATRTMNTRTEEIFYYYDTNTGKEGKLDIVMHKMQEKVQSINYNPFDQKLYVYNDGYLLNYDLSVLQKPQ.

A signal peptide spans methionine 1 to glycine 20. Asparagine 72 and asparagine 136 each carry an N-linked (GlcNAc...) asparagine glycan. Residues aspartate 155–threonine 234 adopt a coiled-coil conformation. The 263-residue stretch at serine 245 to glutamine 507 folds into the Olfactomedin-like domain. A disulfide bridge connects residues cysteine 246 and cysteine 437. An N-linked (GlcNAc...) asparagine glycan is attached at asparagine 253.

Homomultimer; disulfide-linked. Interacts with NDUFA13. Interacts with cell surface lectins (locutions ricinus communis agglutinin I, concanavalin-A and wheat germ agglutinin) and cadherin. In terms of processing, N-glycosylated. Expressed during myeloid lineage development. Much higher expression in bone marrow neutrophils than in peripheral blood neutrophils (at protein level). Strongly expressed in the prostate, small intestine and colon and moderately expressed in the bone marrow and stomach. Overexpressed in some pancreatic cancer tissues.

Its subcellular location is the secreted. The protein localises to the extracellular space. The protein resides in the mitochondrion. May promote proliferation of pancreatic cancer cells by favoring the transition from the S to G2/M phase. In myeloid leukemic cell lines, inhibits cell growth and induces cell differentiation and apoptosis. May play a role in the inhibition of EIF4EBP1 phosphorylation/deactivation. Facilitates cell adhesion, most probably through interaction with cell surface lectins and cadherin. This chain is Olfactomedin-4 (OLFM4), found in Homo sapiens (Human).